The following is a 121-amino-acid chain: MVRIVSKQPRKQRKARYNAPNHTRGRFLSAALSPELRGKYNSRRTRVVKGDTVKVLRGDFAGDEGVVDAVDMKACRLVVHGVMVTKADGTEVPRPVDPSNVQITKLNLKDKLREERLGGGA.

Residues M1–A30 form a disordered region.

Belongs to the universal ribosomal protein uL24 family. Part of the 50S ribosomal subunit.

In terms of biological role, one of two assembly initiator proteins, it binds directly to the 5'-end of the 23S rRNA, where it nucleates assembly of the 50S subunit. Located at the polypeptide exit tunnel on the outside of the subunit. In Methanoculleus marisnigri (strain ATCC 35101 / DSM 1498 / JR1), this protein is Large ribosomal subunit protein uL24.